The chain runs to 194 residues: PPE family protein PPE41 (194 aa).

The protein belongs to the mycobacterial PPE family. Forms a heterodimer with PE25. The dimer forms a 1:1:1 heterotrimeric complex with EspG5. PPE41 interacts directly with EspG5.

Its subcellular location is the secreted. The protein localises to the cell surface. The PE25/PPE41 dimer induces both a strong humoral and cellular immune response. The dimer induces necrosis, but not apoptosis, in mouse macrophage cells. It also induces activation and maturation of mouse dendritic cells and drives Th2-biased immune responses. This Mycobacterium tuberculosis (strain ATCC 25618 / H37Rv) protein is PPE family protein PPE41.